The chain runs to 894 residues: Translation initiation factor IF-2 (894 aa).

Residues 52–301 (DRGAAPNKLT…RRPSTLTQGF (250 aa)) are disordered. Polar residues predominate over residues 68-82 (STLNIPSTGGKSKSV). Residues 107-154 (EQARREAEELAQHQVQRDAEEKAKRAAEDKAKREAAEQAKRVAAESDK) are compositionally biased toward basic and acidic residues. The span at 155-168 (LTNQQTNTMTKSPQ) shows a compositional bias: polar residues. Basic and acidic residues-rich tracts occupy residues 171–214 (EKAR…ERGG) and 237–254 (HARE…GDRR). Residues 255–269 (SRTRGGKATKQKKTS) show a composition bias toward basic residues. Basic and acidic residues predominate over residues 270 to 283 (RLSESKADREEARA). The tr-type G domain maps to 393–562 (SRAPVVTIMG…LLQAEVLELK (170 aa)). Residues 402 to 409 (GHVDHGKT) are G1. 402 to 409 (GHVDHGKT) is a GTP binding site. Positions 427–431 (GITQH) are G2. A G3 region spans residues 448–451 (DTPG). Residues 448 to 452 (DTPGH) and 502 to 505 (NKID) contribute to the GTP site. Positions 502–505 (NKID) are G4. A G5 region spans residues 538–540 (SAK).

This sequence belongs to the TRAFAC class translation factor GTPase superfamily. Classic translation factor GTPase family. IF-2 subfamily.

It localises to the cytoplasm. Functionally, one of the essential components for the initiation of protein synthesis. Protects formylmethionyl-tRNA from spontaneous hydrolysis and promotes its binding to the 30S ribosomal subunits. Also involved in the hydrolysis of GTP during the formation of the 70S ribosomal complex. This chain is Translation initiation factor IF-2, found in Sodalis glossinidius (strain morsitans).